A 315-amino-acid polypeptide reads, in one-letter code: Acyl transferase (315 aa).

Residues Ser116, Asp213, and His243 each act as charge relay system in the active site.

Belongs to the LuxD family.

Its pathway is lipid metabolism; fatty acid reduction for biolumincescence. In terms of biological role, acyl transferase is part of the fatty acid reductase system required for aldehyde biosynthesis; it produces fatty acids for the luminescent reaction. This Photobacterium leiognathi protein is Acyl transferase.